A 579-amino-acid polypeptide reads, in one-letter code: Mycobactin import ATP-binding/permease protein IrtB (579 aa).

Topologically, residues Met1–Arg16 are cytoplasmic. A helical membrane pass occupies residues Leu17 to Leu37. Residues Leu17–Ser299 enclose the ABC transmembrane type-1 domain. Over Leu38–Arg52 the chain is Periplasmic. A helical transmembrane segment spans residues Ala53–Val73. At Thr74–Glu123 the chain is on the cytoplasmic side. A helical membrane pass occupies residues Leu124–Ala146. At Leu147–Gln155 the chain is on the periplasmic side. Residues Leu156–Ala178 traverse the membrane as a helical segment. The Cytoplasmic portion of the chain corresponds to Arg179–Gln237. A helical transmembrane segment spans residues Ile238–Thr258. Topologically, residues Thr259–Glu579 are periplasmic. The ABC transporter domain occupies Ile332 to Gln567. ATP is bound at residue Gly366–Ser373.

This sequence belongs to the ABC transporter superfamily. Siderophore-Fe(3+) uptake transporter (SIUT) (TC 3.A.1.21) family. Forms a heterodimer with IrtA.

It localises to the cell inner membrane. Part of the ABC transporter complex IrtAB involved in the import of iron-bound mycobactin (Fe-MBT) and carboxymycobactin (Fe-cMBT). Transmembrane domains (TMD) form a pore in the membrane and the ATP-binding domain (NBD) is responsible for energy generation. The protein is Mycobactin import ATP-binding/permease protein IrtB (irtB) of Mycobacterium bovis (strain ATCC BAA-935 / AF2122/97).